The sequence spans 318 residues: Small ribosomal subunit protein uS3 (318 aa).

One can recognise a KH type-2 domain in the interval 17–86 (MDEYFAEQLS…NPQIDAQEVK (70 aa)). A compositionally biased stretch (basic and acidic residues) spans 198 to 229 (SVEVEEPAEKPAEKPAEKPAEKAAAPKKEAAK). Positions 198-275 (SVEVEEPAEK…VQAETSEEIE (78 aa)) are disordered. Pro residues predominate over residues 234 to 250 (APAPEAPAPAPEAPAPA). The span at 253 to 275 (EEAEVAEPEEAEEVQAETSEEIE) shows a compositional bias: acidic residues.

Belongs to the universal ribosomal protein uS3 family. As to quaternary structure, part of the 30S ribosomal subunit.

Binds the lower part of the 30S subunit head. The polypeptide is Small ribosomal subunit protein uS3 (Methanosarcina acetivorans (strain ATCC 35395 / DSM 2834 / JCM 12185 / C2A)).